Here is a 477-residue protein sequence, read N- to C-terminus: ATP synthase subunit beta (477 aa).

ATP is bound at residue 163–170; it reads GGAGVGKT.

Belongs to the ATPase alpha/beta chains family. F-type ATPases have 2 components, CF(1) - the catalytic core - and CF(0) - the membrane proton channel. CF(1) has five subunits: alpha(3), beta(3), gamma(1), delta(1), epsilon(1). CF(0) has four main subunits: a(1), b(1), b'(1) and c(9-12).

The protein resides in the cellular thylakoid membrane. It carries out the reaction ATP + H2O + 4 H(+)(in) = ADP + phosphate + 5 H(+)(out). In terms of biological role, produces ATP from ADP in the presence of a proton gradient across the membrane. The catalytic sites are hosted primarily by the beta subunits. In Synechococcus sp. (strain JA-3-3Ab) (Cyanobacteria bacterium Yellowstone A-Prime), this protein is ATP synthase subunit beta.